The following is a 158-amino-acid chain: S-ribosylhomocysteine lyase (158 aa).

Residues histidine 54, histidine 58, and cysteine 124 each coordinate Fe cation.

Belongs to the LuxS family. Homodimer. Fe cation serves as cofactor.

The catalysed reaction is S-(5-deoxy-D-ribos-5-yl)-L-homocysteine = (S)-4,5-dihydroxypentane-2,3-dione + L-homocysteine. Functionally, involved in the synthesis of autoinducer 2 (AI-2) which is secreted by bacteria and is used to communicate both the cell density and the metabolic potential of the environment. The regulation of gene expression in response to changes in cell density is called quorum sensing. Catalyzes the transformation of S-ribosylhomocysteine (RHC) to homocysteine (HC) and 4,5-dihydroxy-2,3-pentadione (DPD). The polypeptide is S-ribosylhomocysteine lyase (Limosilactobacillus reuteri (strain DSM 20016) (Lactobacillus reuteri)).